We begin with the raw amino-acid sequence, 357 residues long: Glutamine synthetase root isozyme 1 (357 aa).

Residues 19 to 99 (IIAEYIWIGG…VMCDCYTPQG (81 aa)) form the GS beta-grasp domain. Positions 106–357 (KRYSAAKVFS…AETTILWNGN (252 aa)) constitute a GS catalytic domain.

This sequence belongs to the glutamine synthetase family. As to quaternary structure, homooctamer. In terms of tissue distribution, found mainly in the cortical tissues of seedling roots, and in the root tip.

The protein resides in the cytoplasm. The enzyme catalyses L-glutamate + NH4(+) + ATP = L-glutamine + ADP + phosphate + H(+). Functionally, plays a role in the flow of nitrogen into nitrogenous organic compounds. The polypeptide is Glutamine synthetase root isozyme 1 (GLN6) (Zea mays (Maize)).